The chain runs to 483 residues: NADH-quinone oxidoreductase subunit N (483 aa).

Helical transmembrane passes span 8-28 (INLA…GLLL), 45-65 (IAAG…GATQ), 78-98 (FAAF…VVSW), 106-126 (LGNG…MFMI), 131-151 (FLVL…LAAY), 166-186 (FVLG…IYGV), 206-226 (MLGI…KIAA), 241-261 (PTSV…AALF), 275-295 (WGPI…LAGL), 303-323 (LLAY…AVGN), 330-350 (VLVY…LILV), 373-393 (LALL…LAGF), 399-419 (IFMA…VLFS), and 452-472 (AIVG…GSLM).

It belongs to the complex I subunit 2 family. As to quaternary structure, NDH-1 is composed of 14 different subunits. Subunits NuoA, H, J, K, L, M, N constitute the membrane sector of the complex.

Its subcellular location is the cell inner membrane. The enzyme catalyses a quinone + NADH + 5 H(+)(in) = a quinol + NAD(+) + 4 H(+)(out). NDH-1 shuttles electrons from NADH, via FMN and iron-sulfur (Fe-S) centers, to quinones in the respiratory chain. The immediate electron acceptor for the enzyme in this species is believed to be ubiquinone. Couples the redox reaction to proton translocation (for every two electrons transferred, four hydrogen ions are translocated across the cytoplasmic membrane), and thus conserves the redox energy in a proton gradient. The protein is NADH-quinone oxidoreductase subunit N of Magnetococcus marinus (strain ATCC BAA-1437 / JCM 17883 / MC-1).